Here is an 846-residue protein sequence, read N- to C-terminus: Auxin response factor 2A (846 aa).

The span at 1–12 (MAASEVSIQGYS) shows a compositional bias: polar residues. A disordered region spans residues 1–30 (MAASEVSIQGYSEPSDGSRPVSETGRSSSG). Positions 146-248 (FCKTLTASDT…ELRVGVRRAM (103 aa)) form a DNA-binding region, TF-B3. Disordered regions lie at residues 380–423 (PPAL…HSQA) and 660–693 (DMNI…GVAA). Polar residues-rich tracts occupy residues 398 to 408 (ILPTSPDSSVL) and 414 to 423 (SRATADHSQA). Over residues 675–693 (SDQRSEQSKGSKVDDGVAA) the composition is skewed to basic and acidic residues. Residues 720–804 (RSCTKVHKQG…RKIFIYTKEE (85 aa)) form the PB1 domain. Polar residues-rich tracts occupy residues 809-824 (NPGT…SSVA) and 836-846 (QLPSESGQAES). Positions 809–846 (NPGTLNSKGEDTSSVAEGSDAKEVKNLQLPSESGQAES) are disordered.

It belongs to the ARF family. In terms of assembly, homodimers and heterodimers. Interacts with ASR1. In terms of tissue distribution, expressed in root, leaf and flower. Expressed in flower buds about three days before opening including ovary, petal and sepal with the highest in stamen. Expressed in stem. Expressed in fruit. Expressed in seeds.

It localises to the nucleus. In terms of biological role, auxin response factors (ARFs) are transcriptional factors that bind specifically to the DNA sequence 5'-TGTCTC-3' found in the auxin-responsive promoter elements (AuxREs). Could act as transcriptional activator or repressor. Involved in the control of fruit ripening process. Regulates expression of a number of ripening regulators, transcription factors, and ethylene biosynthesis and signaling components. May act as a transcriptional repressor of auxin-responsive genes. Regulates vegetative growth, lateral root formation and flower organ senescence, possibly partially by regulating gene expression of auxin and ethylene response factor (ERF) genes. Plays a negative role in axillary shoot meristem formation. This Solanum lycopersicum (Tomato) protein is Auxin response factor 2A.